The chain runs to 352 residues: MDYQVSSPTYDIDYDTSEPCQKINVKQIAARLLPPLYSLVFIFGFVGNMLVILVLINCKRLKSMTDIYLLNLAISDLFFLLTVPFWAHYAAAQWDFGNTMCQLLTGLYFIGFFSGIFFIILLTIDRYLAIVHAVFALKARTVTFGVVTSVITWVVAVFASLPGIIFTRSQKEGLHYTCSSHFPYSQYQFWKNFQTLKIVILGLVLPLLVMVICYSGILKTLLRCRNEKKRHRAVRLIFTIMIVYFLFWAPYNIVLLLNTFQEFFGLNNCSSSNRLDQAMQVTETLGMTHCCINPIIYAFVGEKFRNYLLVFFQKHIAKHFCKCCSIFQQEAPERASSVYTRSTGEQEISVGL.

Over 1–30 (MDYQVSSPTYDIDYDTSEPCQKINVKQIAA) the chain is Extracellular. Sulfotyrosine is present on Y3. O-linked (GalNAc...) serine glycosylation is found at S6 and S7. A sulfotyrosine mark is found at Y10 and Y14. 2 disulfide bridges follow: C20-C269 and C101-C178. Residues 31–58 (RLLPPLYSLVFIFGFVGNMLVILVLINC) form a helical membrane-spanning segment. At 59–68 (KRLKSMTDIY) the chain is on the cytoplasmic side. Residues 69–89 (LLNLAISDLFFLLTVPFWAHY) traverse the membrane as a helical segment. At 90–102 (AAAQWDFGNTMCQ) the chain is on the extracellular side. The helical transmembrane segment at 103 to 124 (LLTGLYFIGFFSGIFFIILLTI) threads the bilayer. Residues 125–141 (DRYLAIVHAVFALKART) are Cytoplasmic-facing. The helical transmembrane segment at 142–166 (VTFGVVTSVITWVVAVFASLPGIIF) threads the bilayer. Residues 167–198 (TRSQKEGLHYTCSSHFPYSQYQFWKNFQTLKI) lie on the Extracellular side of the membrane. A helical membrane pass occupies residues 199–218 (VILGLVLPLLVMVICYSGIL). The Cytoplasmic segment spans residues 219-235 (KTLLRCRNEKKRHRAVR). Residues 236–260 (LIFTIMIVYFLFWAPYNIVLLLNTF) traverse the membrane as a helical segment. Topologically, residues 261-277 (QEFFGLNNCSSSNRLDQ) are extracellular. A helical transmembrane segment spans residues 278–301 (AMQVTETLGMTHCCINPIIYAFVG). The Cytoplasmic segment spans residues 302–352 (EKFRNYLLVFFQKHIAKHFCKCCSIFQQEAPERASSVYTRSTGEQEISVGL). S-palmitoyl cysteine attachment occurs at residues C321, C323, and C324. Residues S336, S337, S342, and S349 each carry the phosphoserine; by BARK1 modification.

It belongs to the G-protein coupled receptor 1 family. As to quaternary structure, interacts with PRAF2. Efficient ligand binding to CCL3/MIP-1alpha and CCL4/MIP-1beta requires sulfation, O-glycosylation and sialic acid modifications. Glycosylation on Ser-6 is required for efficient binding of CCL4. Interacts with GRK2. Interacts with ARRB1 and ARRB2. Interacts with CNIH4. Interacts with S100A4; this interaction stimulates T-lymphocyte chemotaxis. Sulfated on at least 2 of the N-terminal tyrosines. Sulfation is required for efficient binding of the chemokines, CCL3 and CCL4. In terms of processing, palmitoylation in the C-terminal is important for cell surface expression. Post-translationally, phosphorylation on serine residues in the C-terminal is stimulated by binding CC chemokines especially by APO-RANTES. O-glycosylated, but not N-glycosylated. Ser-6 appears to be the major site even if Ser-7 may be also O-glycosylated. Also sialylated glycans present which contribute to chemokine binding. Thr-16 and Ser-17 may also be glycosylated and, if so, with small moieties such as a T-antigen.

The protein resides in the cell membrane. Functionally, receptor for a number of inflammatory CC-chemokines including CCL3/MIP-1-alpha, CCL4/MIP-1-beta and RANTES and subsequently transduces a signal by increasing the intracellular calcium ion level. May play a role in the control of granulocytic lineage proliferation or differentiation. Participates in T-lymphocyte migration to the infection site by acting as a chemotactic receptor. This chain is C-C chemokine receptor type 5 (CCR5), found in Nomascus leucogenys (Northern white-cheeked gibbon).